Consider the following 440-residue polypeptide: MSVKATVALVGRPNVGKSALFNRIVGQRISIVDDTPGVTRDRIDGKGEWSGHSFNLIDTGGIFDEEDDILKQVVIQAEVAIDEADVIVFVTDGRDGITPADEEVAATLRKTKKPVLVAVNKSEGNYDQYAMEFYQLGFEQVISISALHGTNTGQLLDEIVELLPEQEYEELNYHEDDIMLSVIGRPNVGKSSLINKILNKERLIVSNMPGTTRDAIDTVIEREDQKYVFIDTAGLRKKSKIDERLEKYSVIRSIKGMERSNIALLLIDVTKGILEQDKKIAGLAEEKGKGLIILLNKWDAIEKDGKAGDKYYETVRLELPSVNYAPIMFLSAQTGKNVEKIFPVIDKVSKEHSKRITTADVNRVIEDAVNYTPPPSKKGKRLKIYYATQVRTRPPTFVLFVNNPELMKNSYKRYLQNQLRRAFGFEGTPIRILERVKQRR.

2 EngA-type G domains span residues 5 to 167 (ATVA…PEQE) and 178 to 353 (IMLS…KEHS). Residues 11–18 (GRPNVGKS), 58–62 (DTGGI), 120–123 (NKSE), 184–191 (GRPNVGKS), 231–235 (DTAGL), and 296–299 (NKWD) contribute to the GTP site. One can recognise a KH-like domain in the interval 354-438 (KRITTADVNR…PIRILERVKQ (85 aa)).

It belongs to the TRAFAC class TrmE-Era-EngA-EngB-Septin-like GTPase superfamily. EngA (Der) GTPase family. In terms of assembly, associates with the 50S ribosomal subunit.

GTPase that plays an essential role in the late steps of ribosome biogenesis. The polypeptide is GTPase Der (Natranaerobius thermophilus (strain ATCC BAA-1301 / DSM 18059 / JW/NM-WN-LF)).